Here is an 87-residue protein sequence, read N- to C-terminus: Small ribosomal subunit protein bS18 (87 aa).

It belongs to the bacterial ribosomal protein bS18 family. As to quaternary structure, part of the 30S ribosomal subunit. Forms a tight heterodimer with protein bS6.

Functionally, binds as a heterodimer with protein bS6 to the central domain of the 16S rRNA, where it helps stabilize the platform of the 30S subunit. The sequence is that of Small ribosomal subunit protein bS18 from Oleidesulfovibrio alaskensis (strain ATCC BAA-1058 / DSM 17464 / G20) (Desulfovibrio alaskensis).